Reading from the N-terminus, the 160-residue chain is SsrA-binding protein (160 aa).

This sequence belongs to the SmpB family.

It localises to the cytoplasm. Its function is as follows. Required for rescue of stalled ribosomes mediated by trans-translation. Binds to transfer-messenger RNA (tmRNA), required for stable association of tmRNA with ribosomes. tmRNA and SmpB together mimic tRNA shape, replacing the anticodon stem-loop with SmpB. tmRNA is encoded by the ssrA gene; the 2 termini fold to resemble tRNA(Ala) and it encodes a 'tag peptide', a short internal open reading frame. During trans-translation Ala-aminoacylated tmRNA acts like a tRNA, entering the A-site of stalled ribosomes, displacing the stalled mRNA. The ribosome then switches to translate the ORF on the tmRNA; the nascent peptide is terminated with the 'tag peptide' encoded by the tmRNA and targeted for degradation. The ribosome is freed to recommence translation, which seems to be the essential function of trans-translation. The sequence is that of SsrA-binding protein from Chloroflexus aurantiacus (strain ATCC 29364 / DSM 637 / Y-400-fl).